We begin with the raw amino-acid sequence, 1013 residues long: GTPase-activating Rap/Ran-GAP domain-like protein 3 (1013 aa).

Phosphoserine is present on serine 45. The 217-residue stretch at 191 to 407 (LLVLEEQEGS…RTLDMLIRSL (217 aa)) folds into the Rap-GAP domain. Residues serine 426 and serine 432 each carry the phosphoserine modification. The region spanning 489-800 (PHEAVCADPW…QLVASRSDIY (312 aa)) is the CNH domain. Disordered regions lie at residues 810–842 (VSSG…SLGE) and 913–1013 (LLGL…IDLK). The span at 811-821 (SSGGSSKGASA) shows a compositional bias: low complexity. Threonine 827 is modified (phosphothreonine). The segment covering 952-962 (SSSSDRIPSGS) has biased composition (low complexity). 2 stretches are compositionally biased toward polar residues: residues 963–982 (LESA…SSDQ) and 993–1003 (VSGSSPFQLTA).

Belongs to the GARNL3 family.

The chain is GTPase-activating Rap/Ran-GAP domain-like protein 3 (GARNL3) from Homo sapiens (Human).